An 803-amino-acid chain; its full sequence is Putative metal ion transporter C27B12.12c (803 aa).

Polar residues predominate over residues 1–20 (MSFQQPSNGAQGGNNNALEK). Positions 1-255 (MSFQQPSNGA…SSDVSGSDEN (255 aa)) are disordered. The segment covering 21-45 (TSSNEATSSSSTQVSSLSASGISVS) has biased composition (low complexity). Polar residues predominate over residues 58–82 (MQVQSSQHLEANVQSPVSSQTTYAT). Basic residues-rich tracts occupy residues 105-123 (KPKKKKRSRRNRKASRKKI) and 152-166 (QSNKKHRGRRVKHSP). Composition is skewed to low complexity over residues 181–194 (ALSASMGSSSQHAS) and 218–253 (SSSSDSLYSVSSMSIKNDSNSDSLSSSSSSDVSGSD). A Phosphoserine modification is found at Ser318. 2 disordered regions span residues 326 to 349 (PRLKSTHSSIADNEDREVDSQVDE) and 406 to 431 (FEPHWNDLSPHDPNDPSSSLHSNNAE). Over residues 337–347 (DNEDREVDSQV) the composition is skewed to acidic residues. The span at 406–419 (FEPHWNDLSPHDPN) shows a compositional bias: basic and acidic residues. Positions 420 to 430 (DPSSSLHSNNA) are enriched in polar residues. Phosphoserine occurs at positions 449 and 452. 2 consecutive transmembrane segments (helical) span residues 745-765 (ITLIGTLLVPMNLVTGLFGMN) and 776-796 (LAWFFGILGVLLGSIAIGWII).

It belongs to the CorA metal ion transporter (MIT) (TC 1.A.35) family.

The protein resides in the cytoplasm. It is found in the membrane. This Schizosaccharomyces pombe (strain 972 / ATCC 24843) (Fission yeast) protein is Putative metal ion transporter C27B12.12c.